Reading from the N-terminus, the 381-residue chain is tRNA pseudouridine synthase Pus10 (381 aa).

Asp226 (nucleophile) is an active-site residue.

This sequence belongs to the pseudouridine synthase Pus10 family.

It catalyses the reaction uridine(54) in tRNA = pseudouridine(54) in tRNA. The catalysed reaction is uridine(55) in tRNA = pseudouridine(55) in tRNA. Functionally, responsible for synthesis of pseudouridine from uracil-54 and uracil-55 in the psi GC loop of transfer RNAs. The chain is tRNA pseudouridine synthase Pus10 from Nitrosopumilus maritimus (strain SCM1).